A 106-amino-acid polypeptide reads, in one-letter code: MAQAFVNSKIQPGKVVVFIKPTCPYCRKTQELLSQLPFKQGLLEFVDITAAGNISEIQDYLQQLTGARTVPRVFIGQECIGGCTDLVNMHERGELLTRLKQMGALQ.

Ala-2 is subject to N-acetylalanine. The 104-residue stretch at 3–106 (QAFVNSKIQP…TRLKQMGALQ (104 aa)) folds into the Glutaredoxin domain. At Lys-9 the chain carries N6-succinyllysine. Intrachain disulfides connect Cys-23/Cys-26 and Cys-79/Cys-83.

The protein belongs to the glutaredoxin family.

It is found in the cytoplasm. In terms of biological role, has a glutathione-disulfide oxidoreductase activity in the presence of NADPH and glutathione reductase. Reduces low molecular weight disulfides and proteins. The sequence is that of Glutaredoxin-1 (GLRX) from Bos taurus (Bovine).